The following is a 262-amino-acid chain: Phosphatidylserine decarboxylase proenzyme (262 aa).

Active-site charge relay system; for autoendoproteolytic cleavage activity residues include Asp-86, His-142, and Ser-226. Ser-226 (schiff-base intermediate with substrate; via pyruvic acid; for decarboxylase activity) is an active-site residue. Ser-226 carries the pyruvic acid (Ser); by autocatalysis modification.

The protein belongs to the phosphatidylserine decarboxylase family. PSD-B subfamily. Prokaryotic type I sub-subfamily. Heterodimer of a large membrane-associated beta subunit and a small pyruvoyl-containing alpha subunit. Pyruvate is required as a cofactor. In terms of processing, is synthesized initially as an inactive proenzyme. Formation of the active enzyme involves a self-maturation process in which the active site pyruvoyl group is generated from an internal serine residue via an autocatalytic post-translational modification. Two non-identical subunits are generated from the proenzyme in this reaction, and the pyruvate is formed at the N-terminus of the alpha chain, which is derived from the carboxyl end of the proenzyme. The autoendoproteolytic cleavage occurs by a canonical serine protease mechanism, in which the side chain hydroxyl group of the serine supplies its oxygen atom to form the C-terminus of the beta chain, while the remainder of the serine residue undergoes an oxidative deamination to produce ammonia and the pyruvoyl prosthetic group on the alpha chain. During this reaction, the Ser that is part of the protease active site of the proenzyme becomes the pyruvoyl prosthetic group, which constitutes an essential element of the active site of the mature decarboxylase.

The protein resides in the cell membrane. It carries out the reaction a 1,2-diacyl-sn-glycero-3-phospho-L-serine + H(+) = a 1,2-diacyl-sn-glycero-3-phosphoethanolamine + CO2. It participates in phospholipid metabolism; phosphatidylethanolamine biosynthesis; phosphatidylethanolamine from CDP-diacylglycerol: step 2/2. Functionally, catalyzes the formation of phosphatidylethanolamine (PtdEtn) from phosphatidylserine (PtdSer). This is Phosphatidylserine decarboxylase proenzyme from Bacillus cereus (strain B4264).